The primary structure comprises 114 residues: Procyclic form-specific polypeptide A-alpha (114 aa).

The N-terminal stretch at 1–27 (MAPRSLYLLAILLFSANLFAGVGFAAA) is a signal peptide. Positions 33 to 95 (SNVIVKGGKG…EPEPEPGAAT (63 aa)) are disordered. Over residues 47–89 (DGPEEPEETGPEETGPEETGPEETGPEETGPEETGPEETEPEP) the composition is skewed to acidic residues. A run of 7 repeats spans residues 48 to 52 (GPEEP), 56 to 60 (GPEET), 61 to 65 (GPEET), 66 to 70 (GPEET), 71 to 75 (GPEET), 76 to 80 (GPEET), and 81 to 85 (GPEET). A 7 X 5 AA tandem repeats of G-P-E-E-[PT] region spans residues 48 to 85 (GPEEPEETGPEETGPEETGPEETGPEETGPEETGPEET). G92 is lipidated: GPI-anchor amidated glycine. Residues 93 to 114 (AATLKSVALPFAVAAAALVAAF) constitute a propeptide that is removed on maturation.

It is found in the cell membrane. Its function is as follows. Major surface antigen of procyclic forms. This Trypanosoma brucei brucei protein is Procyclic form-specific polypeptide A-alpha (PARPA-ALPHA).